We begin with the raw amino-acid sequence, 424 residues long: DUF21 domain-containing protein At4g33700 (424 aa).

Over 1-11 the chain is Extracellular; that stretch reads MAVEYVCCSPN. One can recognise a CNNM transmembrane domain in the interval 8-191; sequence CSPNFFIHIA…GKGGELTHDE (184 aa). A helical membrane pass occupies residues 12 to 32; sequence FFIHIAVIVFLVLFAGLMSGL. At 33 to 70 the chain is on the cytoplasmic side; the sequence is TLGLMSLSLVDLEVLAKSGTPEHRKYAAKILPVVKNQH. A helical transmembrane segment spans residues 71–91; that stretch reads LLLVTLLICNAAAMETLPIFL. Topologically, residues 92–94 are extracellular; that stretch reads DGL. The helical transmembrane segment at 95-115 threads the bilayer; it reads VTAWGAILISVTLILLFGEII. Residues 116–136 are Cytoplasmic-facing; the sequence is PQSICSRYGLAIGATVAPFVR. Residues 137-157 traverse the membrane as a helical segment; that stretch reads VLVFICLPVAWPISKLLDFLL. Residues 158–424 are Extracellular-facing; sequence GHRRAALFRR…DETDHHFEDS (267 aa). In terms of domain architecture, CBS 1 spans 210–271; that stretch reads MTPISDIFVI…TINPDEEIPV (62 aa). Asn273 and Asn319 each carry an N-linked (GlcNAc...) asparagine glycan. CBS domains follow at residues 275 to 331 and 355 to 416; these read TIRR…DVDS and PNRA…IFDE. Disordered regions lie at residues 321–340 and 355–374; these read SVKEARVDVDSEGTPTPQER and PNRASSFKGGSKSKKWSKDN. Ser331 bears the Phosphoserine mark.

The protein localises to the membrane. This Arabidopsis thaliana (Mouse-ear cress) protein is DUF21 domain-containing protein At4g33700 (CBSDUF6).